The primary structure comprises 52 residues: Protein YabQ (52 aa).

In terms of biological role, identified as a multicopy suppressor of the slow growth phenotype of an rsgA (yjeQ) deletion mutant. This chain is Protein YabQ (yabQ), found in Escherichia coli (strain K12).